Consider the following 270-residue polypeptide: MAAPGEALTQSGYIEHHLTNLSLAKLGLVADEASFWNVHIDSLFFSVFTGMLFLWVFRSVAKKATTGVPGKLQCFVEMIVEFVADNVKETFHGRNPLIAPLALTIFCWVILMNLMDLVPIDFLPYPAEHWLGIPYLKVVPSADVNITMAMALGVFALMIYYSIKVKGLGGFAKELALHPFNHPIMIPFNLLLEVISLLAKPLSLGMRLFGNMFAGEVVFILIAAMLPWYLQWVGALPWAIFHILVILIQAFVFMMLTIVYLSMAHEDSDH.

The next 5 helical transmembrane spans lie at Asn37–Phe57, Ile98–Val118, Asp143–Ile163, Val217–Pro237, and Ala239–Val259.

This sequence belongs to the ATPase A chain family. As to quaternary structure, F-type ATPases have 2 components, CF(1) - the catalytic core - and CF(0) - the membrane proton channel. CF(1) has five subunits: alpha(3), beta(3), gamma(1), delta(1), epsilon(1). CF(0) has three main subunits: a(1), b(2) and c(9-12). The alpha and beta chains form an alternating ring which encloses part of the gamma chain. CF(1) is attached to CF(0) by a central stalk formed by the gamma and epsilon chains, while a peripheral stalk is formed by the delta and b chains.

The protein resides in the cell inner membrane. Its function is as follows. Key component of the proton channel; it plays a direct role in the translocation of protons across the membrane. The chain is ATP synthase subunit a from Aliivibrio fischeri (strain ATCC 700601 / ES114) (Vibrio fischeri).